Here is a 94-residue protein sequence, read N- to C-terminus: Large ribosomal subunit protein bL28 (94 aa).

The tract at residues 1 to 21 is disordered; sequence MARRCEVTGRGTVSGNNVSHS. Residues 11–20 show a composition bias toward polar residues; sequence GTVSGNNVSH.

The protein belongs to the bacterial ribosomal protein bL28 family.

The protein is Large ribosomal subunit protein bL28 of Leptospira borgpetersenii serovar Hardjo-bovis (strain JB197).